Reading from the N-terminus, the 183-residue chain is (2E)-enoyl-[ACP] glycyltransferase (183 aa).

The protein belongs to the FcoT family.

The catalysed reaction is a (3R)-3-[(carboxymethyl)amino]fatty acid + holo-[ACP] + H(+) = a (2E)-enoyl-[ACP] + glycine + H2O. It catalyses the reaction (3R)-3-[(carboxylmethyl)amino]decanoate + holo-[ACP] + H(+) = (2E)-decenoyl-[ACP] + glycine + H2O. The enzyme catalyses a fatty acyl-CoA + H2O = a fatty acid + CoA + H(+). Involved in the biosynthesis of a unique class of isonitrile lipopeptides (INLPs) that seem to play a role in metal acquisition. Catalyzes a Michael addition of glycine to the beta-position of an alpha,beta-unsaturated fatty acyl-[ACP], producing a (3R)-3-[(carboxymethyl)amino]fatty acid. Acts on the (2E)-decenoyl moiety loaded on the acyl-carrier protein (ACP) BQ2027_MB0103, forming the product (3R)-3-[(carboxymethyl)amino]decanoate released from the ACP. Displays thioesterase activity with a preference for long chain fatty acyl groups. This is (2E)-enoyl-[ACP] glycyltransferase from Mycobacterium bovis (strain ATCC BAA-935 / AF2122/97).